A 196-amino-acid chain; its full sequence is Peptidyl-tRNA hydrolase (196 aa).

Tyr-18 serves as a coordination point for tRNA. The active-site Proton acceptor is the His-23. TRNA is bound by residues Phe-69, Asn-71, and Asn-117.

It belongs to the PTH family. Monomer.

Its subcellular location is the cytoplasm. The enzyme catalyses an N-acyl-L-alpha-aminoacyl-tRNA + H2O = an N-acyl-L-amino acid + a tRNA + H(+). Functionally, hydrolyzes ribosome-free peptidyl-tRNAs (with 1 or more amino acids incorporated), which drop off the ribosome during protein synthesis, or as a result of ribosome stalling. In terms of biological role, catalyzes the release of premature peptidyl moieties from peptidyl-tRNA molecules trapped in stalled 50S ribosomal subunits, and thus maintains levels of free tRNAs and 50S ribosomes. In Aliivibrio salmonicida (strain LFI1238) (Vibrio salmonicida (strain LFI1238)), this protein is Peptidyl-tRNA hydrolase.